The chain runs to 212 residues: Uracil phosphoribosyltransferase (212 aa).

Residues arginine 78, arginine 103, and 130–138 (DPMLATGGS) contribute to the 5-phospho-alpha-D-ribose 1-diphosphate site. Residues isoleucine 193 and 198–200 (GDA) each bind uracil. Aspartate 199 contacts 5-phospho-alpha-D-ribose 1-diphosphate.

Belongs to the UPRTase family. Mg(2+) serves as cofactor.

It carries out the reaction UMP + diphosphate = 5-phospho-alpha-D-ribose 1-diphosphate + uracil. It participates in pyrimidine metabolism; UMP biosynthesis via salvage pathway; UMP from uracil: step 1/1. With respect to regulation, allosterically activated by GTP. Functionally, catalyzes the conversion of uracil and 5-phospho-alpha-D-ribose 1-diphosphate (PRPP) to UMP and diphosphate. The chain is Uracil phosphoribosyltransferase from Pseudomonas entomophila (strain L48).